The primary structure comprises 93 residues: UPF0147 protein MM_1385 (93 aa).

This sequence belongs to the UPF0147 family.

In Methanosarcina mazei (strain ATCC BAA-159 / DSM 3647 / Goe1 / Go1 / JCM 11833 / OCM 88) (Methanosarcina frisia), this protein is UPF0147 protein MM_1385.